The primary structure comprises 181 residues: Ras-like protein 1 (181 aa).

G10–S17 contributes to the GTP binding site. The Effector region signature appears at Y32–Y40. GTP-binding positions include D57 to Q61 and N116 to D119. Cysteine methyl ester is present on C178. C178 carries the S-geranylgeranyl cysteine lipid modification. A propeptide spans K179–L181 (removed in mature form).

This sequence belongs to the small GTPase superfamily. Ras family.

Its subcellular location is the cell membrane. The catalysed reaction is GTP + H2O = GDP + phosphate + H(+). Alternates between an inactive form bound to GDP and an active form bound to GTP. Activated by a guanine nucleotide-exchange factor (GEF) and inactivated by a GTPase-activating protein (GAP). Its function is as follows. Ras proteins bind GDP/GTP and possess intrinsic GTPase activity. Plays a role in eye development by regulating cell growth, survival of postmitotic ommatidial cells and differentiation of photoreceptor cells. During larval development, mediates Ptth/tor signaling leading to the production of ecdysone, a hormone required for the initiation of metamorphosis. This Drosophila mojavensis (Fruit fly) protein is Ras-like protein 1.